The sequence spans 123 residues: Large ribosomal subunit protein bL12 (123 aa).

The protein belongs to the bacterial ribosomal protein bL12 family. In terms of assembly, homodimer. Part of the ribosomal stalk of the 50S ribosomal subunit. Forms a multimeric L10(L12)X complex, where L10 forms an elongated spine to which 2 to 4 L12 dimers bind in a sequential fashion. Binds GTP-bound translation factors.

Functionally, forms part of the ribosomal stalk which helps the ribosome interact with GTP-bound translation factors. Is thus essential for accurate translation. The chain is Large ribosomal subunit protein bL12 from Photorhabdus laumondii subsp. laumondii (strain DSM 15139 / CIP 105565 / TT01) (Photorhabdus luminescens subsp. laumondii).